Here is a 188-residue protein sequence, read N- to C-terminus: Large ribosomal subunit protein eL18 (188 aa).

Lysine 119 participates in a covalent cross-link: Glycyl lysine isopeptide (Lys-Gly) (interchain with G-Cter in SUMO2). Position 130 is a phosphoserine (serine 130). A disordered region spans residues 151 to 188 (HFGKAPGTPHSHTKPYVRSKGRKFERARGRRASRGYKN). Threonine 158 bears the Phosphothreonine mark. Basic residues-rich tracts occupy residues 161–171 (SHTKPYVRSKG) and 178–188 (RGRRASRGYKN). Lysine 164 participates in a covalent cross-link: Glycyl lysine isopeptide (Lys-Gly) (interchain with G-Cter in SUMO2).

The protein belongs to the eukaryotic ribosomal protein eL18 family. In terms of assembly, component of the large ribosomal subunit.

The protein resides in the cytoplasm. It localises to the cytosol. The protein localises to the rough endoplasmic reticulum. Component of the large ribosomal subunit. The ribosome is a large ribonucleoprotein complex responsible for the synthesis of proteins in the cell. This chain is Large ribosomal subunit protein eL18 (RPL18), found in Homo sapiens (Human).